Here is a 99-residue protein sequence, read N- to C-terminus: Large ribosomal subunit protein bL27 (99 aa).

The interval 1–21 (MAHKKGGGSTRNGRDSRAKRL) is disordered.

The protein belongs to the bacterial ribosomal protein bL27 family.

This is Large ribosomal subunit protein bL27 from Thermomicrobium roseum (strain ATCC 27502 / DSM 5159 / P-2).